We begin with the raw amino-acid sequence, 356 residues long: MTIRALVVDDSALIRKVLSDILNEDPKIRVVGTAVNGKDGLEKVIKLRPDVVLLDNVMPVLDGLKTLARIMKEQPTPVVIVSALGERAEEITLTAFEYGAVDVIEKPSGILSQSMPEMAEEICRKVRTAPKANLKNLECMRDSEPLNPEKRETKENRVLKKAAPRNILAIGASTGGPRALEKLICSLPAELPAAVLVVQHMPPGFTASLSKRLDSKSALRVKEAQEGDRVEDGTVLIAPGNYHMEIVRNKVNSLEEETIHLSCGPKELGSRPSVNVLFRSIASVYGSRVISLVLTGMNCDGADGAEEIKKMGGKVIAEARSSCVVYGMPGEIVRRNLADLVLPLDKMAEEIIRIIG.

The 118-residue stretch at 4–121 (RALVVDDSAL…SQSMPEMAEE (118 aa)) folds into the Response regulatory domain. Asp55 carries the 4-aspartylphosphate modification. Positions 161–356 (KAAPRNILAI…MAEEIIRIIG (196 aa)) constitute a CheB-type methylesterase domain. Catalysis depends on residues Ser173, His200, and Asp300.

It belongs to the CheB family. Phosphorylated by CheA. Phosphorylation of the N-terminal regulatory domain activates the methylesterase activity.

The protein resides in the cytoplasm. It carries out the reaction [protein]-L-glutamate 5-O-methyl ester + H2O = L-glutamyl-[protein] + methanol + H(+). The enzyme catalyses L-glutaminyl-[protein] + H2O = L-glutamyl-[protein] + NH4(+). In terms of biological role, involved in chemotaxis. Part of a chemotaxis signal transduction system that modulates chemotaxis in response to various stimuli. Catalyzes the demethylation of specific methylglutamate residues introduced into the chemoreceptors (methyl-accepting chemotaxis proteins or MCP) by CheR. Also mediates the irreversible deamidation of specific glutamine residues to glutamic acid. In Methanosarcina acetivorans (strain ATCC 35395 / DSM 2834 / JCM 12185 / C2A), this protein is Protein-glutamate methylesterase/protein-glutamine glutaminase 2.